An 853-amino-acid polypeptide reads, in one-letter code: DNA mismatch repair protein MutS (853 aa).

614-621 provides a ligand contact to ATP; sequence GPNMGGKS.

This sequence belongs to the DNA mismatch repair MutS family.

Functionally, this protein is involved in the repair of mismatches in DNA. It is possible that it carries out the mismatch recognition step. This protein has a weak ATPase activity. This Escherichia coli O6:H1 (strain CFT073 / ATCC 700928 / UPEC) protein is DNA mismatch repair protein MutS.